Reading from the N-terminus, the 82-residue chain is Small ribosomal subunit protein bS18A (82 aa).

This sequence belongs to the bacterial ribosomal protein bS18 family. In terms of assembly, part of the 30S ribosomal subunit. Forms a tight heterodimer with protein bS6.

In terms of biological role, binds as a heterodimer with protein bS6 to the central domain of the 16S rRNA, where it helps stabilize the platform of the 30S subunit. The chain is Small ribosomal subunit protein bS18A from Streptomyces griseus subsp. griseus (strain JCM 4626 / CBS 651.72 / NBRC 13350 / KCC S-0626 / ISP 5235).